Here is a 555-residue protein sequence, read N- to C-terminus: Formate--tetrahydrofolate ligase (555 aa).

64-71 (TPAGEGKT) contributes to the ATP binding site.

It belongs to the formate--tetrahydrofolate ligase family.

It carries out the reaction (6S)-5,6,7,8-tetrahydrofolate + formate + ATP = (6R)-10-formyltetrahydrofolate + ADP + phosphate. It functions in the pathway one-carbon metabolism; tetrahydrofolate interconversion. In Dinoroseobacter shibae (strain DSM 16493 / NCIMB 14021 / DFL 12), this protein is Formate--tetrahydrofolate ligase.